Reading from the N-terminus, the 425-residue chain is Gamma-glutamyl phosphate reductase (425 aa).

This sequence belongs to the gamma-glutamyl phosphate reductase family.

The protein resides in the cytoplasm. It carries out the reaction L-glutamate 5-semialdehyde + phosphate + NADP(+) = L-glutamyl 5-phosphate + NADPH + H(+). It functions in the pathway amino-acid biosynthesis; L-proline biosynthesis; L-glutamate 5-semialdehyde from L-glutamate: step 2/2. Functionally, catalyzes the NADPH-dependent reduction of L-glutamate 5-phosphate into L-glutamate 5-semialdehyde and phosphate. The product spontaneously undergoes cyclization to form 1-pyrroline-5-carboxylate. The polypeptide is Gamma-glutamyl phosphate reductase (Novosphingobium aromaticivorans (strain ATCC 700278 / DSM 12444 / CCUG 56034 / CIP 105152 / NBRC 16084 / F199)).